Consider the following 635-residue polypeptide: Threonine--tRNA ligase (635 aa).

One can recognise a TGS domain in the interval 1-61 (MITVRLPDGS…EQDSDLSIIT (61 aa)). Residues 242 to 533 (DHRKLGRALD…LIENHAGALP (292 aa)) are catalytic. The Zn(2+) site is built by cysteine 333, histidine 384, and histidine 510.

Belongs to the class-II aminoacyl-tRNA synthetase family. In terms of assembly, homodimer. Zn(2+) serves as cofactor.

The protein localises to the cytoplasm. It catalyses the reaction tRNA(Thr) + L-threonine + ATP = L-threonyl-tRNA(Thr) + AMP + diphosphate + H(+). In terms of biological role, catalyzes the attachment of threonine to tRNA(Thr) in a two-step reaction: L-threonine is first activated by ATP to form Thr-AMP and then transferred to the acceptor end of tRNA(Thr). Also edits incorrectly charged L-seryl-tRNA(Thr). This Herminiimonas arsenicoxydans protein is Threonine--tRNA ligase.